A 1284-amino-acid chain; its full sequence is Kinesin-like protein KIN-4C (1284 aa).

Residues 12-364 (SVKVVVNIRP…LKYANRARNI (353 aa)) enclose the Kinesin motor domain. 91-98 (GQTGSGKT) provides a ligand contact to ATP. Coiled-coil stretches lie at residues 407-445 (SAAL…EQLA), 561-711 (RDHS…QFRS), and 911-950 (MCKE…NMLL). 2 disordered regions span residues 1040–1070 (RRQT…SQEK) and 1158–1284 (MSEK…NHLR). Residues 1043-1070 (TVSSHLNPNPGSGTTQKSAKSEMASQEK) are compositionally biased toward polar residues. Basic and acidic residues-rich tracts occupy residues 1158–1172 (MSEK…RKPL) and 1275–1284 (NANEKENHLR).

The protein belongs to the TRAFAC class myosin-kinesin ATPase superfamily. Kinesin family. KIN-4 subfamily. As to quaternary structure, homodimer.

Functionally, microtubule-dependent motor protein involved in the control of the oriented deposition of cellulose microfibrils. This chain is Kinesin-like protein KIN-4C, found in Oryza sativa subsp. japonica (Rice).